Here is a 790-residue protein sequence, read N- to C-terminus: Tumor necrosis factor alpha-induced protein 3 (790 aa).

Ala2 is subject to N-acetylalanine. The tract at residues 58–300 (PQFREIIHKA…LTDPENEMKE (243 aa)) is TRAF-binding. Residues 92 to 263 (LVALKTNGDG…SHHFVPLVTL (172 aa)) form the OTU domain. Residue Asp100 is part of the active site. Residue Cys103 is the Nucleophile of the active site. Interaction with ubiquitin regions lie at residues 157 to 159 (LCY), 190 to 192 (SLE), and 224 to 227 (FAPL). Residue His256 is the Proton acceptor of the active site. The segment covering 357 to 368 (QENSEQGRREGH) has biased composition (basic and acidic residues). Positions 357 to 377 (QENSEQGRREGHAQNPMEPSV) are disordered. The segment at 369–775 (AQNPMEPSVP…ACDHFGNAKC (407 aa)) is interaction with TNIP1. The segment at 381 to 416 (SLMDVKCETPNCPFFMSVNTQPLCHECSERRQKNQN) adopts an A20-type 1 zinc-finger fold. Residues 386 to 453 (KCETPNCPFF…EPLAWNPEES (68 aa)) are interaction with RIPK1. Residues Cys387, Cys392, Cys404, and Cys407 each contribute to the Zn(2+) site. Disordered regions lie at residues 415-434 (QNKL…PGMA) and 447-468 (AWNP…PSPF). A Phosphoserine modification is found at Ser459. 2 A20-type zinc fingers span residues 472-507 (ETTA…LHAS) and 515-548 (HLDP…AEAS). Zn(2+) is bound by residues Cys478, Cys483, Cys495, Cys498, Cys521, Cys524, Cys536, and Cys539. Residues 550-583 (SLSTSLPPSCHQRSKSDPSRLVRSPSPHSCHRAG) are disordered. Position 575 is a phosphoserine (Ser575). An A20-type 4 zinc finger spans residues 601–636 (RTGTSKCRKAGCVYFGTPENKGFCTLCFIEYRENKH). The interval 605 to 655 (SKCRKAGCVYFGTPENKGFCTLCFIEYRENKHFAAASGKVSPTASRFQNTI) is required for proteasomal degradation of UBE2N and UBE2D3, TRAF6 deubiquitination, and TAX1BP1 interaction with UBE2N. The interval 606-790 (KCRKAGCVYF…ECFQFKQMYG (185 aa)) is sufficient for inhibitory activity of TNF-induced NF-kappa-B activity. Zn(2+)-binding residues include Cys607, Cys612, Cys624, and Cys627. At Ser645 the chain carries Phosphoserine. An A20-type 5 zinc finger spans residues 651–686 (FQNTIPCLGRECGTLGSTMFEGYCQKCFIEAQNQRF). 4 residues coordinate Zn(2+): Cys657, Cys662, Cys674, and Cys677. Basic and acidic residues predominate over residues 689 to 705 (AKRTEEQLRSSQRRDVP). The disordered stretch occupies residues 689-712 (AKRTEEQLRSSQRRDVPRTTQSTS). Residues 697 to 790 (RSSQRRDVPR…ECFQFKQMYG (94 aa)) form a required for lysosomal localization and for TRAF2 lysosomal degradation region. A20-type zinc fingers lie at residues 710–745 (STSR…RMGP) and 756–790 (DPPK…QMYG). Zn(2+) contacts are provided by Cys716, Cys721, Cys733, Cys736, Cys762, Cys767, Cys779, and Cys782.

It belongs to the peptidase C64 family. Homodimer. Interacts with TNIP1, TAX1BP1 and TRAF2. Interacts with RNF11, ITCH and TAX1BP1 only after TNF stimulation; these interaction are transient and they are lost after 1 hour of stimulation with TNF. Interacts with YWHAZ and YWHAH. Interacts with IKBKG; the interaction is induced by TNF stimulation and by polyubiquitin. Interacts with RIPK1. Interacts with UBE2N; the interaction requires TAX1BP1. Interacts with TRAF6; the interaction is inhibited by HTLV-1 protein Tax. Proteolytically cleaved by MALT1 upon TCR stimulation; disrupts NF-kappa-B inhibitory function and results in increased IL-2 production. It is proposed that only a fraction of TNFAIP3 colocalized with TCR and CBM complex is cleaved, leaving the main TNFAIP3 pool intact.

It localises to the cytoplasm. The protein localises to the nucleus. The protein resides in the lysosome. It catalyses the reaction Thiol-dependent hydrolysis of ester, thioester, amide, peptide and isopeptide bonds formed by the C-terminal Gly of ubiquitin (a 76-residue protein attached to proteins as an intracellular targeting signal).. In terms of biological role, ubiquitin-editing enzyme that contains both ubiquitin ligase and deubiquitinase activities. Involved in immune and inflammatory responses signaled by cytokines, such as TNF-alpha and IL-1 beta, or pathogens via Toll-like receptors (TLRs) through terminating NF-kappa-B activity. Essential component of a ubiquitin-editing protein complex, comprising also RNF11, ITCH and TAX1BP1, that ensures the transient nature of inflammatory signaling pathways. In cooperation with TAX1BP1 promotes disassembly of E2-E3 ubiquitin protein ligase complexes in IL-1R and TNFR-1 pathways; affected are at least E3 ligases TRAF6, TRAF2 and BIRC2, and E2 ubiquitin-conjugating enzymes UBE2N and UBE2D3. In cooperation with TAX1BP1 promotes ubiquitination of UBE2N and proteasomal degradation of UBE2N and UBE2D3. Upon TNF stimulation, deubiquitinates 'Lys-63'-polyubiquitin chains on RIPK1 and catalyzes the formation of 'Lys-48'-polyubiquitin chains. This leads to RIPK1 proteasomal degradation and consequently termination of the TNF- or LPS-mediated activation of NF-kappa-B. Deubiquitinates TRAF6 probably acting on 'Lys-63'-linked polyubiquitin. Upon T-cell receptor (TCR)-mediated T-cell activation, deubiquitinates 'Lys-63'-polyubiquitin chains on MALT1 thereby mediating disassociation of the CBM (CARD11:BCL10:MALT1) and IKK complexes and preventing sustained IKK activation. Deubiquitinates NEMO/IKBKG; the function is facilitated by TNIP1 and leads to inhibition of NF-kappa-B activation. Upon stimulation by bacterial peptidoglycans, probably deubiquitinates RIPK2. Can also inhibit I-kappa-B-kinase (IKK) through a non-catalytic mechanism which involves polyubiquitin; polyubiquitin promotes association with IKBKG and prevents IKK MAP3K7-mediated phosphorylation. Targets TRAF2 for lysosomal degradation. In vitro able to deubiquitinate 'Lys-11'-, 'Lys-48'- and 'Lys-63' polyubiquitin chains. Inhibitor of programmed cell death. Has a role in the function of the lymphoid system. Required for LPS-induced production of pro-inflammatory cytokines and IFN beta in LPS-tolerized macrophages. The polypeptide is Tumor necrosis factor alpha-induced protein 3 (TNFAIP3) (Homo sapiens (Human)).